The following is a 376-amino-acid chain: Response regulator aspartate phosphatase H (376 aa).

TPR repeat units follow at residues 99 to 132 (YYSLFFRGMYEFDQKEYVEAIGYYREAEKELPFV), 139 to 172 (AEFHFKVAEAYYHMKQTHVSMYHILQALDIYQNH), 180 to 213 (IQSLFVIAGNYDDFKHYDKALPHLEAALELAMDI), 220 to 253 (AISLLNIANSYDRSGDDQMAVEHFQKAAKVSREK), 259 to 292 (PKVLFGLSWTLCKAGQTQKAFQFIEEGLDHITAR), and 334 to 367 (EACARSAAAVFESSCHFEQAAAFYRKVLKAQEDI).

It belongs to the Rap family. In terms of assembly, homodimer. Interacts with phosphorylated Spo0F. Each RapH protomer is bound to a monomer of Spo0F, forming a heterotetrameric complex. May also interact with non-phosphorylated Spo0F to inhibit the sporulation phosphorelay. Interacts with the C-terminal DNA-binding region of ComA. Does not interact with DegU.

The protein localises to the cytoplasm. Its activity is regulated as follows. Both activities are inhibited by RapH. Its function is as follows. Dual specificity regulatory protein that can control both sporulation and competence by acting on two distinct response regulators: Spo0F and ComA, respectively. Is involved in the temporal separation of competence and sporulation. Acts as a phosphatase that specifically dephosphorylates the sporulation initiation phosphotransferase Spo0F and inhibits its activity. RapH can also antagonize sporulation by sterically blocking phosphoryl transfer to and from Spo0F. In addition, inhibits the activity of ComA, a transcriptional factor that regulates the development of genetic competence. Acts by binding to ComA, leading to the inhibition of its DNA-binding activity. This is Response regulator aspartate phosphatase H (rapH) from Bacillus subtilis (strain 168).